The chain runs to 275 residues: Elongation factor Ts (275 aa).

The segment at 76 to 79 is involved in Mg(2+) ion dislocation from EF-Tu; the sequence is TDFV.

Belongs to the EF-Ts family.

The protein resides in the cytoplasm. In terms of biological role, associates with the EF-Tu.GDP complex and induces the exchange of GDP to GTP. It remains bound to the aminoacyl-tRNA.EF-Tu.GTP complex up to the GTP hydrolysis stage on the ribosome. This is Elongation factor Ts from Corynebacterium kroppenstedtii (strain DSM 44385 / JCM 11950 / CIP 105744 / CCUG 35717).